The sequence spans 458 residues: Monomethylamine methyltransferase MtmB1 (458 aa).

Pyrrolysine 202 is a non-standard amino acid (pyrrolysine).

It belongs to the monomethylamine methyltransferase family. As to quaternary structure, dimer of homotrimers. Can form a complex with MtmC (MtmC1 or MtmC2).

It carries out the reaction Co(I)-[methylamine-specific corrinoid protein] + methylamine + H(+) = methyl-Co(III)-[methylamine-specific corrinoid protein] + NH4(+). Its pathway is one-carbon metabolism; methanogenesis from methylamine. Its function is as follows. Catalyzes the transfer of the methyl group from monomethylamine to the corrinoid cofactor of MtmC (MtmC1 or MtmC2). This chain is Monomethylamine methyltransferase MtmB1 (mtmB1), found in Methanosarcina barkeri.